Reading from the N-terminus, the 342-residue chain is Serine/threonine-protein kinase SAPK1 (342 aa).

Residues 4–260 (YEVMRDIGSG…IPEIKNHPWF (257 aa)) enclose the Protein kinase domain. Residues 10 to 18 (IGSGNFGVA) and lysine 33 contribute to the ATP site. Aspartate 123 functions as the Proton acceptor in the catalytic mechanism. The interval 253–342 (EIKNHPWFLK…ENSGDFVCAL (90 aa)) is C-terminal.

It belongs to the protein kinase superfamily. Ser/Thr protein kinase family. Phosphorylated. In terms of tissue distribution, expressed in leaf blades, leaf sheaths and roots. Expressed in shoots and roots of young seedlings.

The catalysed reaction is L-seryl-[protein] + ATP = O-phospho-L-seryl-[protein] + ADP + H(+). It catalyses the reaction L-threonyl-[protein] + ATP = O-phospho-L-threonyl-[protein] + ADP + H(+). Activated by phosphorylation in response to hyperosmotic stress within 5 minutes. May play a role in signal transduction of hyperosmotic response. The protein is Serine/threonine-protein kinase SAPK1 (SAPK1) of Oryza sativa subsp. japonica (Rice).